A 526-amino-acid chain; its full sequence is NAD(P)H-quinone oxidoreductase chain 4 (526 aa).

Helical transmembrane passes span 5-25 (FPWL…VPLI), 32-52 (WYSF…FFTS), 87-107 (LILL…PVTL), 111-131 (MFHF…AVQD), 133-153 (VLFF…LAIW), 165-185 (FILY…AMYF), 211-231 (FLGL…HTWL), 239-259 (TAPV…YALI), 273-293 (FAPL…LTSF), 302-320 (IAYS…VGSL), 331-351 (QMIS…ATYD), 371-393 (IFAM…GFVA), and 414-434 (LVVL…LSML).

Belongs to the complex I subunit 4 family.

It is found in the cell inner membrane. The enzyme catalyses a plastoquinone + NADH + (n+1) H(+)(in) = a plastoquinol + NAD(+) + n H(+)(out). It catalyses the reaction a plastoquinone + NADPH + (n+1) H(+)(in) = a plastoquinol + NADP(+) + n H(+)(out). Its function is as follows. NDH-1 shuttles electrons from NAD(P)H, via FMN and iron-sulfur (Fe-S) centers, to quinones in the respiratory chain. The immediate electron acceptor for the enzyme in this species is believed to be plastoquinone. Couples the redox reaction to proton translocation (for every two electrons transferred, four hydrogen ions are translocated across the cytoplasmic membrane), and thus conserves the redox energy in a proton gradient. This is NAD(P)H-quinone oxidoreductase chain 4 from Gloeobacter violaceus (strain ATCC 29082 / PCC 7421).